The primary structure comprises 740 residues: Phosphoribosylformylglycinamidine synthase subunit PurL (740 aa).

H54 is an active-site residue. ATP-binding residues include Y57 and K96. E98 is a Mg(2+) binding site. Substrate contacts are provided by residues 99-102 (SHNH) and R121. H100 (proton acceptor) is an active-site residue. D122 serves as a coordination point for Mg(2+). Q245 contributes to the substrate binding site. Position 273 (D273) interacts with Mg(2+). A substrate-binding site is contributed by 317-319 (ESQ). D499 and G536 together coordinate ATP. N537 provides a ligand contact to Mg(2+). S539 provides a ligand contact to substrate.

This sequence belongs to the FGAMS family. In terms of assembly, monomer. Part of the FGAM synthase complex composed of 1 PurL, 1 PurQ and 2 PurS subunits.

The protein localises to the cytoplasm. It carries out the reaction N(2)-formyl-N(1)-(5-phospho-beta-D-ribosyl)glycinamide + L-glutamine + ATP + H2O = 2-formamido-N(1)-(5-O-phospho-beta-D-ribosyl)acetamidine + L-glutamate + ADP + phosphate + H(+). It participates in purine metabolism; IMP biosynthesis via de novo pathway; 5-amino-1-(5-phospho-D-ribosyl)imidazole from N(2)-formyl-N(1)-(5-phospho-D-ribosyl)glycinamide: step 1/2. In terms of biological role, part of the phosphoribosylformylglycinamidine synthase complex involved in the purines biosynthetic pathway. Catalyzes the ATP-dependent conversion of formylglycinamide ribonucleotide (FGAR) and glutamine to yield formylglycinamidine ribonucleotide (FGAM) and glutamate. The FGAM synthase complex is composed of three subunits. PurQ produces an ammonia molecule by converting glutamine to glutamate. PurL transfers the ammonia molecule to FGAR to form FGAM in an ATP-dependent manner. PurS interacts with PurQ and PurL and is thought to assist in the transfer of the ammonia molecule from PurQ to PurL. The sequence is that of Phosphoribosylformylglycinamidine synthase subunit PurL from Anoxybacillus flavithermus (strain DSM 21510 / WK1).